A 1149-amino-acid polypeptide reads, in one-letter code: Protogenin A (1149 aa).

The signal sequence occupies residues 1–23 (MASFKRDLYLFLAVFLSISGVWS). Residues 24 to 932 (FSELFFIKEP…GFYHLDQRSM (909 aa)) are Extracellular-facing. Ig-like domains lie at 27–117 (LFFI…ARLT), 122–209 (STFT…ATLT), 222–309 (PRII…ANIT), and 314–399 (PSLV…RLIV). Disulfide bonds link Cys48–Cys100 and Cys143–Cys192. A glycan (N-linked (GlcNAc...) asparagine) is linked at Asn78. Asn230 carries an N-linked (GlcNAc...) asparagine glycan. Residues Cys243 and Cys291 are joined by a disulfide bond. Asn300 and Asn307 each carry an N-linked (GlcNAc...) asparagine glycan. The cysteines at positions 335 and 382 are disulfide-linked. Fibronectin type-III domains are found at residues 408–502 (APRN…TLED), 504–600 (PLRA…TPKA), 605–704 (VPLA…VRDR), 711–804 (PPHH…TLPE), and 809–905 (APVG…IHTD). 2 N-linked (GlcNAc...) asparagine glycosylation sites follow: Asn460 and Asn475. N-linked (GlcNAc...) asparagine glycosylation occurs at Asn617. The interval 646-666 (GQSEAAQAQIPPHHRQHTIGG) is disordered. Asn720, Asn741, and Asn753 each carry an N-linked (GlcNAc...) asparagine glycan. Residues 933 to 953 (AGIAVGVCIALTCIIICILIL) traverse the membrane as a helical segment. The Cytoplasmic segment spans residues 954 to 1149 (ACRSKTRKSC…EQEMTDLHPV (196 aa)). The disordered stretch occupies residues 1060 to 1149 (YTETSPENPP…EQEMTDLHPV (90 aa)). The span at 1061–1073 (TETSPENPPTTLQ) shows a compositional bias: polar residues. The segment covering 1084 to 1106 (EGSHSSEGSHETSDSGRYSHDDT) has biased composition (basic and acidic residues).

The protein belongs to the immunoglobulin superfamily. DCC family. As to expression, expression begins in the posterior region of the embryo and this posterior restriction persists at the 4 s stage. At early somite stages, expressed along the neural tube with lower levels in the lateral and paraxial mesoderm. Expression decreases caudally and rostrally becomes restricted to the ventral part of the brain. Widespread in the spinal cord at 30 hours post-fertilization (hpf) and is also expressed in the lens from this time. At 40 hpf, expression is restricted to the lens.

It is found in the membrane. In terms of biological role, may play a role in anteroposterior axis elongation. This chain is Protogenin A, found in Danio rerio (Zebrafish).